The sequence spans 215 residues: CASP-like protein 1E1 (215 aa).

Residues 1–51 (MESSRGKPGLNGSGGGAAAFDYSSRRGYYTGAGAALPPLAAGSRAPPVDPC) lie on the Cytoplasmic side of the membrane. The helical transmembrane segment at 52–72 (CVVLRVFVLLGTLASAVVMAA) threads the bilayer. Topologically, residues 73–103 (DRQSTTVQIAAGEELAPPLRVPVTAKWTYSS) are extracellular. Residues 104–124 (AFVYFVVANAMVFAFSAAALA) traverse the membrane as a helical segment. Residues 125-130 (AVRRRS) lie on the Cytoplasmic side of the membrane. The chain crosses the membrane as a helical span at residues 131–151 (AVVPVMVGDLVAMALLFSAVG). Over 152 to 185 (AAAQFGLLGERGNAHVRWAKVCDVYGPFCERAMA) the chain is Extracellular. The helical transmembrane segment at 186 to 206 (AVVVALIAAFADLVLLMLTIL) threads the bilayer. The Cytoplasmic portion of the chain corresponds to 207-215 (TIHKASSYY).

Belongs to the Casparian strip membrane proteins (CASP) family. In terms of assembly, homodimer and heterodimers.

It is found in the cell membrane. The protein is CASP-like protein 1E1 of Oryza sativa subsp. japonica (Rice).